A 507-amino-acid polypeptide reads, in one-letter code: Rhamnogalacturonase A (507 aa).

The signal sequence occupies residues 1-21; the sequence is MYVSRLLLFLAPLLVKGQLSG. A disulfide bridge connects residues Cys-38 and Cys-64. Asp-215 functions as the Proton donor in the catalytic mechanism. Cys-217 and Cys-234 form a disulfide bridge. Asn-235 carries an N-linked (GlcNAc...) asparagine glycan. The active site involves His-290. Asn-317 carries N-linked (GlcNAc...) asparagine glycosylation. 2 disulfides stabilise this stretch: Cys-340/Cys-346 and Cys-368/Cys-377. Low complexity predominate over residues 462-491; that stretch reads SPATSSPTATSTAISSVDPVSAATTTATSH. The interval 462–507 is disordered; sequence SPATSSPTATSTAISSVDPVSAATTTATSHGHGKSHHKHQCRAHRH. The span at 492 to 507 shows a compositional bias: basic residues; it reads GHGKSHHKHQCRAHRH.

Belongs to the glycosyl hydrolase 28 family.

The protein localises to the secreted. The catalysed reaction is Endohydrolysis of alpha-D-GalA-(1-&gt;2)-alpha-L-Rha glycosidic bond in the rhamnogalacturonan I backbone with initial inversion of anomeric configuration releasing oligosaccharides with beta-D-GalA at the reducing end.. Pectinolytic enzymes consist of four classes of enzymes: pectine lyase, polygalacturonase, pectin methylesterase and rhamnogalacturonase. Hydrolyzes alpha-D-galacturonopyranosyl-(1,2)-alpha-L-rhamnopyranosyl linkages in the backbone of the hairy regions of pectins. Active against linseed rhamnogalacturonan. The polypeptide is Rhamnogalacturonase A (rhgA) (Emericella nidulans (strain FGSC A4 / ATCC 38163 / CBS 112.46 / NRRL 194 / M139) (Aspergillus nidulans)).